A 293-amino-acid polypeptide reads, in one-letter code: Ribonuclease HIII (293 aa).

The RNase H type-2 domain occupies 78–293 (LPLIGTDEVG…TEKAKKRLER (216 aa)). Residues D84, E85, and D187 each coordinate a divalent metal cation.

It belongs to the RNase HII family. RnhC subfamily. The cofactor is Mn(2+). It depends on Mg(2+) as a cofactor.

Its subcellular location is the cytoplasm. The catalysed reaction is Endonucleolytic cleavage to 5'-phosphomonoester.. Its function is as follows. Endonuclease that specifically degrades the RNA of RNA-DNA hybrids. In Streptococcus pneumoniae (strain 70585), this protein is Ribonuclease HIII.